The chain runs to 357 residues: NADPH HC-toxin reductase 1 (357 aa).

NADP(+) is bound by residues arginine 40, lysine 47, 68 to 69 (DL), 88 to 90 (VAT), tyrosine 178, lysine 182, 207 to 210 (LGLV), and threonine 222. Lysine 182 functions as the Proton donor in the catalytic mechanism.

This sequence belongs to the NAD(P)-dependent epimerase/dehydratase family.

Activity is sensitive to heat, dependent on NADPH, and inhibited by p-hydroxymercuribenzoate and disulfiram. Functionally, in tandem with Hm2, NADPH-dependent Helminthosporium carbonum (HC) toxin reductase (HCTR), which inactivates HC toxin, a cyclic tetrapeptide produced by the fungus Cochliobolus carbonum to permit infection and acting as an inhibitor of host histone deacetylases (HDACs), thus conferring resistance against C.carbonum race 1 in resistant cultivars (e.g. cv. B73 and cv. Wisconsin 22). Catalyzes the production of 8-hydroxy derivative of HC-toxin via the reduction of the 8-keto group of 2-amino-9,10-epoxy-8-oxo-decanoic acid, an amino acid of the HC-toxin. The sequence is that of NADPH HC-toxin reductase 1 from Zea mays (Maize).